We begin with the raw amino-acid sequence, 196 residues long: DnaA initiator-associating protein DiaA (196 aa).

The SIS domain occupies 34–196; sequence LVQSLLNGNK…DNTLFPHQDV (163 aa).

It belongs to the SIS family. DiaA subfamily. As to quaternary structure, homotetramer; dimer of dimers.

Required for the timely initiation of chromosomal replication via direct interactions with the DnaA initiator protein. This Escherichia coli O6:K15:H31 (strain 536 / UPEC) protein is DnaA initiator-associating protein DiaA.